Reading from the N-terminus, the 599-residue chain is MLRKGTVALINPNQIHPPIAPYALDVLTTALEASGFEAHVLDLTFHLDDWRQTLRDYFRAERPLLVGVTCRNTDTVYALEQRPFVDGYKAVIDEVRRLTAAPVVAGGVGFSTMPFALVDYFGIEYGVKGPGEKIICDLARALAEGRSADRIHIPGLLVNRGPGNVTRVAPPALDPRAAPAPSSSPSPSPAPSSSSAPVPVPLSFAAVGHHESRAWQAETELPYTRRSGEPYKVDNLRYYREGGLGSILTKNGCVYKCSFCVEPDAKGTQFARRGITAVVDEMEALTAQGIHDLHTTDSEFNLSIAHSKNLLREIVRRRDHDATSPLRDLRLWVYCQPSPFDEEFAELLAAAGCAGVNIGADHTRPEMLDGWKVTAKGTRYYDFADTERLVQLCHRNGMLTMVEALFGMPGETLETMRDCVDRMMELDATVTGFSLGLRLLPYMGLAKSLAEQCDGVRTVRGLQSNNASGPIVLKQLHQCDGPIEYERQFMFDESGDFRLVCYFSPDLPEAPGTADSPDGIWRASVDFLWDRIPKSEQYRVMLPTLSGSSENDNNYADNPFLTSLNRKGYTGAFWAHWRDREAIMSGATLPLGELAEAVR.

One can recognise a B12-binding domain in the interval 4 to 149 (KGTVALINPN…RALAEGRSAD (146 aa)). A disordered region spans residues 167–197 (RVAPPALDPRAAPAPSSSPSPSPAPSSSSAP). Residues 168 to 181 (VAPPALDPRAAPAP) are compositionally biased toward low complexity. The Radical SAM core domain maps to 239 to 492 (YREGGLGSIL…IEYERQFMFD (254 aa)). C253, C257, and C260 together coordinate [4Fe-4S] cluster.

The cofactor is [4Fe-4S] cluster. Cob(II)alamin is required as a cofactor.

The enzyme catalyses L-tryptophan + S-adenosyl-L-methionine = 2-methyl-L-tryptophan + S-adenosyl-L-homocysteine + H(+). Its function is as follows. Involved in the biosynthetic pathway of the antibiotic thiostrepton A. First, TsrM catalyzes the transfer of a methyl group from S-adenosyl methionine (SAM) to cobalamin, leading to the formation of methylcobalamin (CH3-cobalamin) and S-adenosyl-L-homocysteine (SAH). Then the methyl group is transferred to the C2 position of tryptophan (Trp) with the concerted action of the radical SAM [4Fe-4S] center, leading to the production of methyltryptophan. This Streptomyces laurentii protein is Tryptophan 2-C-methyltransferase.